Here is a 618-residue protein sequence, read N- to C-terminus: DELLA protein SLN1 (618 aa).

The segment at 1–36 is disordered; the sequence is MKREYQDGGGSGGGGDEMGSSRDKMMVSSSEAGEGE. The segment covering 7–17 has biased composition (gly residues); that stretch reads DGGGSGGGGDE. A DELLA motif motif is present at residues 39-43; the sequence is DELLA. Disordered regions lie at residues 106-137 and 159-197; these read LNAPPPPLPPAPPQLNASTSSTVTGGGGYFDL and APADLSADSVRDPKRMRTGGSSTSSSSSSSSSLGGGAAR. Pro residues predominate over residues 108–118; it reads APPPPLPPAPP. Low complexity-rich tracts occupy residues 119 to 128 and 176 to 197; these read QLNASTSSTV and TGGSSTSSSSSSSSSLGGGAAR. The 394-residue stretch at 221 to 614 folds into the GRAS domain; that stretch reads VDTQEAGIRL…RPLIATSAWR (394 aa). Positions 228–284 are leucine repeat I (LRI); that stretch reads IRLVHALLACAEAVQQENLSAAEALVKQIPLLAASQGGAMRKVAAYFGEALARRVFR. A LxCxE motif motif is present at residues 235–239; that stretch reads LACAE. A VHIID region spans residues 303-368; sequence HAHFYESCPY…GGPPSFRLTG (66 aa). Positions 334 to 338 match the VHIID motif; that stretch reads VHVVD. A leucine repeat II (LRII) region spans residues 382–421; sequence QVGWKLAQFAHTIRVDFQYRGLVAATLADLEPFMLQPEGE. A PFYRE region spans residues 431 to 535; the sequence is IAVNSVFEMH…EVYLGRQICN (105 aa). The segment at 538 to 614 is SAW; the sequence is ACEGTERTER…RPLIATSAWR (77 aa).

Belongs to the GRAS family. DELLA subfamily. Post-translationally, phosphorylated. Ubiquitinated. Upon GA application it is ubiquitinated, leading to its subsequent degradation. In terms of tissue distribution, apparently restricted to regions where growth is occurring in the leaf blade. Localizes almost exclusively to the basal elongation zone (EZ) for the elongating blades of L1, L2 and L3. More detailed fractionation of the L3 blade shows that in cv. Himalaya, it is preferentially localized to the basal third of the EZ, but its presence can still be detected toward the end of the EZ (at protein level).

It is found in the nucleus. Its function is as follows. Probable transcriptional regulator that acts as a repressor of the gibberellin (GA) signaling pathway. Probably acts by participating in large multiprotein complexes that repress transcription of GA-inducible genes. Upon GA application, it is degraded by the proteasome, allowing the GA signaling pathway. Acts as a negative regulator of GAMYB gene expression. The chain is DELLA protein SLN1 (SLN1) from Hordeum vulgare (Barley).